Here is a 439-residue protein sequence, read N- to C-terminus: Histone acetyltransferase GCN5 (439 aa).

2 stretches are compositionally biased toward basic and acidic residues: residues 1–28 (MVTKHQIEEDHLDGATTDPEVKRVKLEN) and 39–59 (ETNKQEGTDKENKGKFEKETE). The disordered stretch occupies residues 1-59 (MVTKHQIEEDHLDGATTDPEVKRVKLENNVEEIQPEQAETNKQEGTDKENKGKFEKETE). Residues 100–255 (IEFRVVNNDN…GGTLMQCSML (156 aa)) form the N-acetyltransferase domain. Residue glutamate 173 is the Proton donor/acceptor of the active site. Acetyl-CoA contacts are provided by residues 177–179 (CAI), 184–190 (QVRGYGA), and 216–219 (YAIG). Positions 327–431 (PKRGPHDAAI…KFFNNKVKEI (105 aa)) constitute a Bromo domain.

This sequence belongs to the acetyltransferase family. GCN5 subfamily. As to quaternary structure, component of the 1.8 MDa SAGA (Spt-Ada-Gcn5 acetyltransferase) complex, which is composed of 19 subunits TRA1, SPT7, TAF5, NGG1/ADA3, SGF73, SPT20/ADA5, SPT8, TAF12, TAF6, HFI1/ADA1, UBP8, GCN5, ADA2, SPT3, SGF29, TAF10, TAF9, SGF11 and SUS1. The SAGA complex is composed of 4 modules, namely the HAT (histone acetyltransferase) module (GCN5, ADA2, NGG1/ADA3 and SGF29), the DUB (deubiquitinating) module (UBP8, SGF11, SGF73 and SUS1), the core or TAF (TBP-associated factor) module (TAF5, TAF6, TAF9, TAF10 and TAF12), and the Tra1 or SPT (Suppressor of Ty) module (TRA1, HFI1/ADA1, SPT3, SPT7, SPT8 and SPT20/ADA5). The Tra1/SPT module binds activators, the core module recruits TBP (TATA-binding protein), the HAT module contains the histone H3 acetyltransferase GCN5, and the DUB module comprises the histone H2B deubiquitinase UBP8. Also identified in an altered form of SAGA, named SALSA (SAGA altered, Spt8 absent) or SLIK (SAGA-like) complex, which contains a C-terminal truncated form of SPT7 and is missing SPT8. However, it has been shown that the SAGA and SAGA-like SALSA/SLIK transcriptional coactivators are structurally and biochemically equivalent. Component of the 0.8 MDa ADA complex, a HAT complex distinct from SAGA, which at least consists of ADA2, NGG1/ADA3, AHC1, AHC2, SGF29 and GCN5. Component of an ADA/GCN5 complex that consists of HFI1/ADA1, ADA2, NGG1/ADA3, SPT20/ADA5 and GCN5 and probably is a subcomplex of SAGA.

It is found in the nucleus. Its subcellular location is the cytoplasm. The catalysed reaction is L-lysyl-[protein] + acetyl-CoA = N(6)-acetyl-L-lysyl-[protein] + CoA + H(+). It carries out the reaction (2E)-butenoyl-CoA + L-lysyl-[protein] = N(6)-(2E)-butenoyl-L-lysyl-[protein] + CoA + H(+). Its function is as follows. Histone acetyltransferase that acetylates histone H2B to form H2BK11ac and H2BK16ac, histone H3 to form H3K9ac, H3K14ac, H3K18ac, H3K23ac, H3K27ac and H3K36ac, with a lower preference histone H4 to form H4K8ac and H4K16ac, and contributes to H2A.Z acetylation. Acetylation of histones gives a specific tag for epigenetic transcription activation and elongation. Operates in concert with certain DNA-binding transcriptional activators such as GCN4 or HAP2/3/4. Its acetyltransferase activity seems to be dependent on the association in different multisubunit complexes. Component of the transcription coactivator SAGA complex. SAGA acts as a general cofactor required for essentially all RNA polymerase II transcription. At the promoters, SAGA is required for transcription pre-initiation complex (PIC) recruitment. It influences RNA polymerase II transcriptional activity through different activities such as TBP interaction (via core/TAF module) and promoter selectivity, interaction with transcription activators (via Tra1/SPT module), and chromatin modification through histone acetylation (via HAT module) and deubiquitination (via DUB module). SAGA preferentially acetylates histones H3 (to form H3K9ac, H3K14ac, H3K18ac and H3K23ac) and H2B and deubiquitinates histone H2B. SAGA interacts with DNA via upstream activating sequences (UASs). Also identified in a modified version of SAGA named SALSA or SLIK. The cleavage of SPT7 and the absence of the SPT8 subunit in SLIK neither drive any major conformational differences in its structure compared with SAGA, nor significantly affect HAT, DUB, or DNA-binding activities. Component of the ADA histone acetyltransferase complex, which preferentially acetylates nucleosomal histones H3 (to form H3K14ac and H3K18ac) and H2B. In addition to histone acetyltransferase, can use different acyl-CoA substrates, such as (2E)-butenoyl-CoA (crotonyl-CoA) and is able to mediate histone crotonylation. Controls the metaphase-to-anaphase transition and is required for correct chromosome segregation and centromere/kinetochore function in mitosis. May be involved in response to DNA damage by genotoxic agents. The sequence is that of Histone acetyltransferase GCN5 from Saccharomyces cerevisiae (strain ATCC 204508 / S288c) (Baker's yeast).